A 78-amino-acid chain; its full sequence is RNA-binding protein Hfq (78 aa).

One can recognise a Sm domain in the interval 10–69 (DPFLNTLRKEHVPVSIYLVNGIKLQGQIESFDQYVVLLRNTVTQMVYKHAISTVVPARAV).

The protein belongs to the Hfq family. As to quaternary structure, homohexamer.

Functionally, RNA chaperone that binds small regulatory RNA (sRNAs) and mRNAs to facilitate mRNA translational regulation in response to envelope stress, environmental stress and changes in metabolite concentrations. Also binds with high specificity to tRNAs. The sequence is that of RNA-binding protein Hfq from Bordetella avium (strain 197N).